Reading from the N-terminus, the 356-residue chain is Heparan sulfate 2-O-sulfotransferase 1 (356 aa).

Over 1-11 the chain is Cytoplasmic; sequence MGLLRIMLPPK. Residues 12-28 form a helical; Signal-anchor for type II membrane protein membrane-spanning segment; it reads LQLLAVLVFGVAVLFLE. Positions 24 to 51 form a coiled coil; sequence VLFLENQIQKLEESRGKLERAIARHEVR. The Lumenal segment spans residues 29–356; the sequence is NQIQKLEESR…FYEKIYPKSN (328 aa). Adenosine 3',5'-bisphosphate contacts are provided by K83, T84, A85, S86, T87, and S88. N108 and N127 each carry an N-linked (GlcNAc...) asparagine glycan. Residues H140 and H142 contribute to the active site. The adenosine 3',5'-bisphosphate site is built by R164 and S172. 2 disulfides stabilise this stretch: C201-C209 and C222-C228. Adenosine 3',5'-bisphosphate contacts are provided by Y279, S285, T290, and K293.

This sequence belongs to the sulfotransferase 3 family. In terms of assembly, homotrimer. In terms of tissue distribution, expressed in heart, limb, head and trunk. At stages 20 and 24, it is expressed in the most regions of the first and second pharyngeal arche. In both wing and leg buds, it is detected at the overlying ectoderm and mesenchyme throughout stages 21, 23 and 24.

Its subcellular location is the golgi apparatus membrane. Its function is as follows. Catalyzes the transfer of a sulfo group from 3'-phospho-5'-adenylyl sulfate (PAPS) to the 2-OH position of iduronic acid (IdoA) or glucuronic acid (GlcA) within the heparan sulfate (HS) chain and participates in HS biosynthesis. The protein is Heparan sulfate 2-O-sulfotransferase 1 of Gallus gallus (Chicken).